A 483-amino-acid chain; its full sequence is Protein nucleotidyltransferase YdiU (483 aa).

ATP is bound by residues G87, G89, R90, K110, D122, G123, R173, and R180. D249 acts as the Proton acceptor in catalysis. Mg(2+) contacts are provided by N250 and D259. D259 contacts ATP.

It belongs to the SELO family. It depends on Mg(2+) as a cofactor. Requires Mn(2+) as cofactor.

It carries out the reaction L-seryl-[protein] + ATP = 3-O-(5'-adenylyl)-L-seryl-[protein] + diphosphate. The enzyme catalyses L-threonyl-[protein] + ATP = 3-O-(5'-adenylyl)-L-threonyl-[protein] + diphosphate. The catalysed reaction is L-tyrosyl-[protein] + ATP = O-(5'-adenylyl)-L-tyrosyl-[protein] + diphosphate. It catalyses the reaction L-histidyl-[protein] + UTP = N(tele)-(5'-uridylyl)-L-histidyl-[protein] + diphosphate. It carries out the reaction L-seryl-[protein] + UTP = O-(5'-uridylyl)-L-seryl-[protein] + diphosphate. The enzyme catalyses L-tyrosyl-[protein] + UTP = O-(5'-uridylyl)-L-tyrosyl-[protein] + diphosphate. Functionally, nucleotidyltransferase involved in the post-translational modification of proteins. It can catalyze the addition of adenosine monophosphate (AMP) or uridine monophosphate (UMP) to a protein, resulting in modifications known as AMPylation and UMPylation. This chain is Protein nucleotidyltransferase YdiU, found in Pectobacterium carotovorum subsp. carotovorum (strain PC1).